The chain runs to 512 residues: SWI/SNF complex subunit SWI3A (512 aa).

In terms of domain architecture, SWIRM spans 13-110 (YTIPAQSSWF…FSSSLKKNDH (98 aa)). Residues 223–274 (SAAAVWTEEEILLLLESVLKHGDDWELISQSVSTKSRLDCISKLIELPFGEF) form the SANT domain. Positions 291 to 325 (DENTEQVQTDGQEHEETETREEKEDRVNEDEPPAK) are disordered. The stretch at 424–488 (ALGAAAAQAK…IEGVKETIIQ (65 aa)) forms a coiled coil.

Homodimers and heterodimers. Interacts with SWI3B, SWI3C, BSH, and the C-terminus of FCA, but not with BRM or SWI3D. As to expression, expressed in roots, stems, leaves and flowers, but not in siliques.

It localises to the nucleus. In terms of biological role, component of a multiprotein complex equivalent of the SWI/SNF complex, an ATP-dependent chromatin-remodeling complex, which is required for the positive and negative regulation of gene expression of a large number of genes. It changes chromatin structure by altering DNA-histone contacts within a nucleosome, leading eventually to a change in nucleosome position, thus facilitating or repressing binding of gene-specific transcription factors. This chain is SWI/SNF complex subunit SWI3A (SWI3A), found in Arabidopsis thaliana (Mouse-ear cress).